The chain runs to 226 residues: NAD(P)H-hydrate epimerase (226 aa).

One can recognise a YjeF N-terminal domain in the interval 10–215 (AIELDLDLFE…ALQRKYQLNL (206 aa)). 58–62 (NNGGD) is a (6S)-NADPHX binding site. 2 residues coordinate K(+): Asn59 and Asp123. (6S)-NADPHX-binding positions include 127–133 (GFGFKPP) and Asp156. Ser159 is a K(+) binding site.

Belongs to the NnrE/AIBP family. K(+) serves as cofactor.

The catalysed reaction is (6R)-NADHX = (6S)-NADHX. It carries out the reaction (6R)-NADPHX = (6S)-NADPHX. Functionally, catalyzes the epimerization of the S- and R-forms of NAD(P)HX, a damaged form of NAD(P)H that is a result of enzymatic or heat-dependent hydration. This is a prerequisite for the S-specific NAD(P)H-hydrate dehydratase to allow the repair of both epimers of NAD(P)HX. The protein is NAD(P)H-hydrate epimerase of Drosophila persimilis (Fruit fly).